Consider the following 2248-residue polypeptide: Putative Polycomb group protein ASXL3 (2248 aa).

The HTH HARE-type domain maps to 10-84; the sequence is RTWAEAARLA…KSGLYALKKE (75 aa). The segment at 156 to 232 is disordered; it reads ALKQALRQQQ…GKQTSQHLKR (77 aa). Over residues 203 to 216 the composition is skewed to basic and acidic residues; the sequence is KNGEADSSDKEMKH. Polar residues predominate over residues 219-228; it reads KSPTGKQTSQ. Positions 254-363 constitute a DEUBAD domain; the sequence is PGSILVNTNL…FERFYGEKLG (110 aa). 11 disordered regions span residues 368–414, 547–583, 607–643, 703–726, 762–853, 869–1052, 1123–1152, 1183–1203, 1431–1462, 1573–1596, and 1990–2068; these read ESVK…PASP, TSSM…EGQF, CISE…CTPA, EASP…PLTS, ERMA…ASIP, LQRT…TGAR, TSKE…ETKM, QQSL…VHSS, KLSA…GFAP, TAPS…ADTT, and LSPN…KRLS. Composition is skewed to polar residues over residues 371–389, 395–407, 564–580, 607–617, and 624–643; these read KLTT…SCGT, SAQT…QPKS, AVET…SSLE, CISETSFSSES, and SLPS…CTPA. The segment covering 796–818 has biased composition (polar residues); the sequence is NLTSQQKNLSNTPEPIIMSSSSI. The segment covering 937–949 has biased composition (low complexity); the sequence is SHTSKSSEPSKSP. 3 stretches are compositionally biased toward basic and acidic residues: residues 950-968, 975-987, and 997-1008; these read DGIR…KTAE, CKEK…DDQS, and PEKEQPPREEPR. Polar residues predominate over residues 1036–1046; sequence RASTSTSVSGG. The span at 2016 to 2046 shows a compositional bias: pro residues; the sequence is HPPPPPPPPPPPPLALPPPPPPPPPLPPPLP. A PHD-type; atypical zinc finger spans residues 2210–2247; that stretch reads ELKCSCRLKAMIVCKGCGAFCHDDCIGPSKLCVACLVV.

The protein belongs to the Asx family. In terms of assembly, core component of the polycomb repressive deubiquitinase (PR-DUB) complex, at least composed of BAP1, one of ASXL1, ASXL2 or (probably) ASXL3, and one of MBD5 or MBD6. Distinct combinations of ASXL and MBD proteins may preferentially bind specific histone modification marks. The PR-DUB core associates with a number of accessory proteins, including FOXK1, FOXK2, KDM1B, HCFC1 and OGT; KDM1B specifically associates with ASXL2 PR-DUB complexes. Interacts (via PHD domain) with MBD5 and MBD6 (via MBD domain); the interaction is probably direct and mediates association of MBD proteins with the PR-DUB core. Expressed in pancreatic islets, testis, neuroblastoma, head and neck tumor.

The protein resides in the nucleus. Its function is as follows. Putative Polycomb group (PcG) protein. PcG proteins act by forming multiprotein complexes, which are required to maintain the transcriptionally repressive state of homeotic genes throughout development. PcG proteins are not required to initiate repression, but to maintain it during later stages of development. They probably act via methylation of histones, rendering chromatin heritably changed in its expressibility. Non-catalytic component of the PR-DUB complex, a complex that specifically mediates deubiquitination of histone H2A monoubiquitinated at 'Lys-119' (H2AK119ub1). The PR-DUB complex is an epigenetic regulator of gene expression and acts as a transcriptional coactivator, affecting genes involved in development, cell communication, signaling, cell proliferation and cell viability. ASXL1, ASXL2 and ASXL3 function redundantly in the PR-DUB complex and are essential for chromatin recruitment and transcriptional activation of associated genes. The chain is Putative Polycomb group protein ASXL3 (ASXL3) from Homo sapiens (Human).